Consider the following 218-residue polypeptide: Thiopurine S-methyltransferase (218 aa).

Trp-10, Leu-45, Glu-66, and Arg-123 together coordinate S-adenosyl-L-methionine.

The protein belongs to the class I-like SAM-binding methyltransferase superfamily. TPMT family.

Its subcellular location is the cytoplasm. It catalyses the reaction S-adenosyl-L-methionine + a thiopurine = S-adenosyl-L-homocysteine + a thiopurine S-methylether.. This Shewanella sp. (strain MR-4) protein is Thiopurine S-methyltransferase.